The primary structure comprises 523 residues: Sorting nexin-2 (523 aa).

Residues 1-104 (MAAEREPPPL…EPSPAVTPVT (104 aa)) are disordered. 2 stretches are compositionally biased toward low complexity: residues 27 to 48 (LFTS…TSLP) and 93 to 104 (SSEPSPAVTPVT). At serine 97 the chain carries Phosphoserine. 2 positions are modified to phosphothreonine: threonine 101 and threonine 104. Serine 117 and serine 119 each carry phosphoserine. The PX domain occupies 140–269 (FDIEIGVSDP…QFLESSELPR (130 aa)). Arginine 183, serine 185, lysine 211, and arginine 235 together coordinate a 1,2-diacyl-sn-glycero-3-phospho-(1D-myo-inositol-3-phosphate). Serine 185 is modified (phosphoserine). An interaction with RhoG region spans residues 260 to 523 (QFLESSELPR…AFLPEAKAIA (264 aa)). Residue serine 277 is modified to Phosphoserine. The segment at 278 to 295 (GAGILRMVNKAADAVNKM) is membrane-binding amphipathic helix. The 225-residue stretch at 299-523 (MNESDAWFEE…AFLPEAKAIA (225 aa)) folds into the BAR domain. Lysine 473 is subject to N6-acetyllysine.

This sequence belongs to the sorting nexin family. Predominantly forms heterodimers with BAR domain-containing sorting nexins SNX5, SNX6 and SNX32; can self-associate to form homodimers. The heterodimers are proposed to self-assemble into helical arrays on the membrane to stabilize and expand local membrane curvature underlying endosomal tubule formation. Thought to be a component of the originally described retromer complex (also called SNX-BAR retromer) which is a pentamer containing the heterotrimeric retromer cargo-selective complex (CSC), also described as vacuolar protein sorting subcomplex (VPS), and a heterodimeric membrane-deforming subcomplex formed between SNX1 or SNX2 and SNX5 or SNX6 (also called SNX-BAR subcomplex); the respective CSC and SNX-BAR subcomplexes associate with low affinity. Interacts with SNX5, SNX6, SNX32, VPS26A, VPS29, VPS35, FNBP1, KALRN, RHOG (GDP-bound form).

The protein localises to the early endosome membrane. It localises to the cell projection. Its subcellular location is the lamellipodium. Functionally, involved in several stages of intracellular trafficking. Interacts with membranes containing phosphatidylinositol 3-phosphate (PtdIns(3P)) or phosphatidylinositol 3,5-bisphosphate (PtdIns(3,5)P2). Acts in part as component of the retromer membrane-deforming SNX-BAR subcomplex. The SNX-BAR retromer mediates retrograde transport of cargo proteins from endosomes to the trans-Golgi network (TGN) and is involved in endosome-to-plasma membrane transport for cargo protein recycling. The SNX-BAR subcomplex functions to deform the donor membrane into a tubular profile called endosome-to-TGN transport carrier (ETC). Can sense membrane curvature and has in vitro vesicle-to-membrane remodeling activity. Required for retrograde endosome-to-TGN transport of TGN38. Promotes KALRN- and RHOG-dependent but retromer-independent membrane remodeling such as lamellipodium formation; the function is dependent on GEF activity of KALRN. In Pongo abelii (Sumatran orangutan), this protein is Sorting nexin-2 (SNX2).